A 497-amino-acid chain; its full sequence is Putative diacyglycerol O-acyltransferase Rv3480c (497 aa).

H143 acts as the Proton acceptor in catalysis.

This sequence belongs to the long-chain O-acyltransferase family.

It catalyses the reaction an acyl-CoA + a 1,2-diacyl-sn-glycerol = a triacyl-sn-glycerol + CoA. The enzyme catalyses di-(9Z)-octadecenoylglycerol + (9Z)-octadecenoyl-CoA = 1,2,3-tri-(9Z-octadecenoyl)-glycerol + CoA. It carries out the reaction hexadecan-1-ol + hexadecanoyl-CoA = hexadecanyl hexadecanoate + CoA. Its pathway is glycerolipid metabolism; triacylglycerol biosynthesis. Its function is as follows. Upon expression in E.coli has a weak triacylglycerol synthase function, making triacylglycerol (TG) from diolein and long-chain fatty acyl-CoA. Also functions weakly as a wax synthase, as it incorporates palmityl alcohol into wax esters in the presence of palmitoyl-CoA. The polypeptide is Putative diacyglycerol O-acyltransferase Rv3480c (Mycobacterium tuberculosis (strain ATCC 25618 / H37Rv)).